The primary structure comprises 1023 residues: NRPS-like oxidoreductase fscA (1023 aa).

The segment at 54–454 (TYGDLNGMAT…NHPFVRQCMV (401 aa)) is adenylation. The region spanning 554-637 (PEDDVIGRQI…SIANHVRSAQ (84 aa)) is the Carrier domain. Serine 596 bears the O-(pantetheine 4'-phosphoryl)serine mark. The Thioester reductase (TE) domain occupies 685–901 (LTGGAGYLGQ…VYDESTTRAR (217 aa)).

The protein belongs to the NRP synthetase family. Pantetheine 4'-phosphate serves as cofactor.

It participates in secondary metabolite biosynthesis. In terms of biological role, NRPS-like oxidoreductasee; part of the fragmented gene cluster that mediates the biosynthesis of fusarochromene, a tryptophan-derived metabolite closely related to a group of mycotoxins including fusarochromanone. Within the pathway, fscA acts as an oxidoreductase that reduces the carboxyl group of 4-hydroxykyrunenine to primary alcohol. The first step of the pathway is the epimerization of L-tryptophan to D-tryptophan in the presence of the NRPS-like tryptophan epimerase fscC. D-tryptophan is subsequently hydroxylated by the tryptophan 6-hydroxylase fscE to yield 6-hydroxytryptophan. The pyrrole ring undergoes cleavaged by the tryptophan 2,3-dioxygenase fscD and is finally converted to 4-hydroxykyrunenine by the hydrolase fscH. The NRPS-like oxidoreductase fscA reduces the carboxyl group to primary alcohol and the DMATS-type prenyltransferase fscG performs prenylation, followed by the formation of a chromene ring catalyzed by the oxidoreductase fscI, which leads to desacetylfusarochromene. Epoxidation by fscF and rearrangement reactions of chromene double bonds convert compound desacetylfusarochromene to fusarochromanones. Although specific acetyltransferases were not found near the fsc gene cluster, several predicted enzymes containing the N-acetyltransferase superfamily domain are present in the genome of F.equiseti. These predicted enzymes may have the potential to convert desacetylfusarochromene to fusarochromene. The chain is NRPS-like oxidoreductase fscA from Fusarium equiseti (Fusarium scirpi).